The primary structure comprises 479 residues: RAC-gamma serine/threonine-protein kinase (479 aa).

Ser-2 is subject to N-acetylserine. In terms of domain architecture, PH spans 5-107 (TIVKEDWVQK…WTEAIQAVAD (103 aa)). Cys-59 and Cys-76 are joined by a disulfide. Residues 148–405 (FDYLKLLGKG…PKEIMRHSFF (258 aa)) form the Protein kinase domain. Residues 154–162 (LGKGTFGKV) and Lys-177 contribute to the ATP site. The Proton acceptor role is filled by Asp-271. A disulfide bond links Cys-293 and Cys-307. Thr-302 carries an O-linked (GlcNAc) threonine glycan. A Phosphothreonine; by PDPK1 modification is found at Thr-305. An O-linked (GlcNAc) threonine glycan is attached at Thr-309. An AGC-kinase C-terminal domain is found at 406–479 (SGVNWQDVYD…QFSYSASGRE (74 aa)). Residues 446–479 (ITPPEKDDDDGMDCMDNERRPHFPQFSYSASGRE) are disordered. At Thr-447 the chain carries Phosphothreonine. Over residues 451–460 (KDDDDGMDCM) the composition is skewed to acidic residues. Ser-472 carries the post-translational modification Phosphoserine; by PKC/PRKCZ. O-linked (GlcNAc) serine; alternate glycosylation is present at Ser-472.

The protein belongs to the protein kinase superfamily. AGC Ser/Thr protein kinase family. RAC subfamily. Interacts (via PH domain) with TCL1A; this enhances AKT3 phosphorylation and activation. Interacts with TRAF6. Interacts with KCTD20. Interacts with BTBD10. Post-translationally, phosphorylation on Thr-305 and Ser-472 is required for full activity. Phosphorylation of the activation loop at Thr-305 by PDPK1/PDK1 is a prerequisite for full activation. Phosphorylation at Ser-472 by mTORC2 in response to growth factors plays a key role in AKT1 activation by facilitating subsequent phosphorylation of the activation loop by PDPK1/PDK1. In terms of processing, ubiquitinated. When fully phosphorylated and translocated into the nucleus, undergoes 'Lys-48'-polyubiquitination catalyzed by TTC3, leading to its degradation by the proteasome. O-GlcNAcylation at Thr-302 and Thr-309 inhibits activating phosphorylation at Thr-305 via disrupting the interaction between AKT and PDPK1/PDK1.

Its subcellular location is the nucleus. The protein resides in the cytoplasm. It localises to the membrane. The catalysed reaction is L-seryl-[protein] + ATP = O-phospho-L-seryl-[protein] + ADP + H(+). The enzyme catalyses L-threonyl-[protein] + ATP = O-phospho-L-threonyl-[protein] + ADP + H(+). Two specific sites, one in the kinase domain (Thr-305) and the other in the C-terminal regulatory region (Ser-472), need to be phosphorylated for its full activation. IGF-1 leads to the activation of AKT3, which may play a role in regulating cell survival. Functionally, AKT3 is one of 3 closely related serine/threonine-protein kinases (AKT1, AKT2 and AKT3) called the AKT kinase, and which regulate many processes including metabolism, proliferation, cell survival, growth and angiogenesis. This is mediated through serine and/or threonine phosphorylation of a range of downstream substrates. Over 100 substrate candidates have been reported so far, but for most of them, no isoform specificity has been reported. AKT3 is the least studied AKT isoform. It plays an important role in brain development and is crucial for the viability of malignant glioma cells. AKT3 isoform may also be the key molecule in up-regulation and down-regulation of MMP13 via IL13. Required for the coordination of mitochondrial biogenesis with growth factor-induced increases in cellular energy demands. Down-regulation by RNA interference reduces the expression of the phosphorylated form of BAD, resulting in the induction of caspase-dependent apoptosis. In Rattus norvegicus (Rat), this protein is RAC-gamma serine/threonine-protein kinase (Akt3).